The primary structure comprises 289 residues: Protoheme IX farnesyltransferase (289 aa).

9 helical membrane-spanning segments follow: residues 18–38 (VTSLVLATIIPGLYLASEQSP), 40–60 (GFLIAITLFGTFLMSSASFIF), 87–107 (VVQATLVGIAMMGSSFYVLAV), 111–131 (LLTALCAFAALISYVFLYTIF), 139–159 (NIVIGGVAGCVGPLIGYAAIG), 168–188 (SLFMMIFLWTPAHFWALAIFL), 212–232 (SIFFYTILYSIACVSFYFLES), 234–254 (MGFLYLIVSLIVCIWMGILSY), and 269–289 (FFFSILHLFIINITIVVDHLI).

Belongs to the UbiA prenyltransferase family. Protoheme IX farnesyltransferase subfamily.

The protein localises to the cell inner membrane. It catalyses the reaction heme b + (2E,6E)-farnesyl diphosphate + H2O = Fe(II)-heme o + diphosphate. It functions in the pathway porphyrin-containing compound metabolism; heme O biosynthesis; heme O from protoheme: step 1/1. Converts heme B (protoheme IX) to heme O by substitution of the vinyl group on carbon 2 of heme B porphyrin ring with a hydroxyethyl farnesyl side group. In Leptospira interrogans serogroup Icterohaemorrhagiae serovar copenhageni (strain Fiocruz L1-130), this protein is Protoheme IX farnesyltransferase.